Here is a 406-residue protein sequence, read N- to C-terminus: MVSGTVGRGTALGAVLLALLAVPAQAGTAAAADLPAPDDTGLQAVLHTALSQGAPGAMVRVDDNGTIHQLSEGVADRATGRAITTTDRFRVGSVTKSFSAVVLLQLVDEGKLDLDASVNTYLPGLLPDDRITVRQVMSHRSGLYDYTNDMFAQTVPGFESVRNKVFSYQDLITLSLKHGVTNAPGAAYSYSNTNFVVAGMLIEKLTGHSVATEYQNRIFTPLNLTDTFYVHPDTVIPGTHANGYLTPDEAGGALVDSTEQTVSWAQSAGAVISSTQDLDTFFSALMSGQLMSAAQLAQMQQWTTVNSTQGYGLGLRRRDLSCGISVYGHTGTVQGYYTYAFASKDGKRSVTALANTSNNVNVLNTMARTLESAFCGKPTTAKLRSATSSATTVERHEDIAPGIARD.

A signal peptide spans 1 to 31 (MVSGTVGRGTALGAVLLALLAVPAQAGTAAA). The Acyl-ester intermediate role is filled by Ser-93. Substrate is bound by residues 151–154 (FAQT), 190–192 (YSN), Arg-316, 330–332 (TGT), and 357–358 (SN). Positions 381–406 (AKLRSATSSATTVERHEDIAPGIARD) are excised as a propeptide. A disordered region spans residues 387-406 (TSSATTVERHEDIAPGIARD). A compositionally biased stretch (basic and acidic residues) spans 393 to 406 (VERHEDIAPGIARD).

This sequence belongs to the peptidase S12 family.

Its subcellular location is the secreted. The catalysed reaction is Preferential cleavage: (Ac)2-L-Lys-D-Ala-|-D-Ala. Also transpeptidation of peptidyl-alanyl moieties that are N-acyl substituents of D-alanine.. It participates in cell wall biogenesis; peptidoglycan biosynthesis. Catalyzes distinct carboxypeptidation and transpeptidation reactions during the last stages of wall peptidoglycan synthesis. Mistaking a beta-lactam antibiotic molecule for a normal substrate (i.e. a D-alanyl-D-alanine-terminated peptide), it becomes immobilized in the form of a long-lived, serine-ester-linked acyl enzyme and thus behave as penicillin-binding protein (PBP). The polypeptide is D-alanyl-D-alanine carboxypeptidase (Streptomyces sp. (strain R61)).